The sequence spans 62 residues: Short neurotoxin 1 (62 aa).

A compositionally biased stretch (polar residues) spans 1 to 16 (LECHNQQSIQTPTTTG). A disordered region spans residues 1–20 (LECHNQQSIQTPTTTGCSGG). 4 disulfide bridges follow: C3–C24, C17–C41, C43–C54, and C55–C60.

Belongs to the three-finger toxin family. Short-chain subfamily. Type I alpha-neurotoxin sub-subfamily. In terms of tissue distribution, expressed by the venom gland.

It localises to the secreted. Binds to muscle nicotinic acetylcholine receptor (nAChR) and inhibit acetylcholine from binding to the receptor, thereby impairing neuromuscular transmission. This chain is Short neurotoxin 1, found in Naja kaouthia (Monocled cobra).